We begin with the raw amino-acid sequence, 312 residues long: Olfactory receptor 6C68 (312 aa).

At 1 to 23 the chain is on the extracellular side; sequence MRKHTAITTFILLGLTEDPQLQV. A helical transmembrane segment spans residues 24–44; the sequence is LLFMFLFITYMLSVTGKLTII. Residues 45-55 lie on the Cytoplasmic side of the membrane; that stretch reads ALTMLDPHLKT. The helical transmembrane segment at 56 to 76 threads the bilayer; the sequence is PMYFFLQNLSFLEISFTATCV. Over 77-95 the chain is Extracellular; the sequence is PRFLYSISTGNKIITYNAC. Cysteines 95 and 177 form a disulfide. The chain crosses the membrane as a helical span at residues 96–116; that stretch reads VIQLFFADLFGVTEFFLLATM. At 117–143 the chain is on the cytoplasmic side; it reads SYDRYVAICKPLHYMAIMSNKVCKTMV. A helical membrane pass occupies residues 144–164; that stretch reads ICCWMAALMIILPPLSLGFHL. Over 165–197 the chain is Extracellular; that stretch reads EFCDSNVINHFGCDALPILKIPCSDTSLIEQMV. The chain crosses the membrane as a helical span at residues 198-218; that stretch reads VASAVLTFIITLVCVVLSYTY. Residues 219 to 239 lie on the Cytoplasmic side of the membrane; the sequence is IIRTILKFPSVQQKKKAFSTC. Residues 240–260 form a helical membrane-spanning segment; that stretch reads SSHITVVSITYGSCIFIYIKP. Residues 261 to 271 lie on the Extracellular side of the membrane; it reads SAKEEVNINKG. Residues 272-292 form a helical membrane-spanning segment; the sequence is VSVLISSISPMLNSFIYTLRN. Residues 293-312 lie on the Cytoplasmic side of the membrane; it reads EQVKQAFHDSLKKIAFRLKK.

The protein belongs to the G-protein coupled receptor 1 family.

The protein localises to the cell membrane. Its function is as follows. Odorant receptor. The protein is Olfactory receptor 6C68 (OR6C68) of Homo sapiens (Human).